The sequence spans 555 residues: GPI-anchor transamidase component PIGS (555 aa).

Residues 2-18 (AAAGAAATHLEVARGKR) lie on the Cytoplasmic side of the membrane. Arg-15 and Arg-18 together coordinate a cardiolipin. The chain crosses the membrane as a helical span at residues 19–39 (AALFFAAVAIVLGLPLWWKTT). The Lumenal portion of the chain corresponds to 40–517 (ETYRASLPYS…LHLLYFPDDQ (478 aa)). Residues Asn-267 and Asn-370 are each glycosylated (N-linked (GlcNAc...) asparagine). Residues 518–532 (KFAIYIPLFLPMAVP) form a helical membrane-spanning segment. Topologically, residues 533–555 (ILLSLVKIFLETRKSWRKPEKTD) are cytoplasmic.

This sequence belongs to the PIGS family. Heteropentamer. Part of the GPI-anchor transamidase complex, consisting of PIGK, PIGT, PIGS, PIGU and GAA1.

Its subcellular location is the endoplasmic reticulum membrane. Its pathway is glycolipid biosynthesis; glycosylphosphatidylinositol-anchor biosynthesis. In terms of biological role, component of the glycosylphosphatidylinositol-anchor (GPI-anchor) transamidase (GPI-T) complex that catalyzes the formation of the linkage between a proprotein and a GPI-anchor and participates in GPI anchored protein biosynthesis. This Homo sapiens (Human) protein is GPI-anchor transamidase component PIGS.